The sequence spans 172 residues: 3-hydroxydecanoyl-[acyl-carrier-protein] dehydratase (172 aa).

H71 is an active-site residue.

Belongs to the thioester dehydratase family. FabA subfamily. Homodimer.

The protein localises to the cytoplasm. It catalyses the reaction a (3R)-hydroxyacyl-[ACP] = a (2E)-enoyl-[ACP] + H2O. It carries out the reaction (3R)-hydroxydecanoyl-[ACP] = (2E)-decenoyl-[ACP] + H2O. The enzyme catalyses (2E)-decenoyl-[ACP] = (3Z)-decenoyl-[ACP]. Its pathway is lipid metabolism; fatty acid biosynthesis. Functionally, necessary for the introduction of cis unsaturation into fatty acids. Catalyzes the dehydration of (3R)-3-hydroxydecanoyl-ACP to E-(2)-decenoyl-ACP and then its isomerization to Z-(3)-decenoyl-ACP. Can catalyze the dehydratase reaction for beta-hydroxyacyl-ACPs with saturated chain lengths up to 16:0, being most active on intermediate chain length. The sequence is that of 3-hydroxydecanoyl-[acyl-carrier-protein] dehydratase from Maricaulis maris (strain MCS10) (Caulobacter maris).